The following is a 202-amino-acid chain: Superoxide dismutase [Mn/Fe] (202 aa).

Positions 26, 80, 163, and 167 each coordinate Fe(3+). Mn(2+) contacts are provided by H26, H80, D163, and H167.

It belongs to the iron/manganese superoxide dismutase family. As to quaternary structure, homodimer. Requires Mn(2+) as cofactor. Fe(3+) is required as a cofactor.

The catalysed reaction is 2 superoxide + 2 H(+) = H2O2 + O2. Its function is as follows. Destroys superoxide anion radicals which are normally produced within the cells and which are toxic to biological systems. Catalyzes the dismutation of superoxide anion radicals into O2 and H2O2 by successive reduction and oxidation of the transition metal ion at the active site. This is Superoxide dismutase [Mn/Fe] (sodB) from Methylomonas sp. (strain J).